Here is a 422-residue protein sequence, read N- to C-terminus: MERKDFETWLDNISVTFLSLTDLQKNETLDHLISLSGAVQLRHLSNNLETLLKRDFLKLLPLELSFYLLKWLDPQTLLTCCLVSKQWNKVISACTEVWQTACKNLGWQIDDSVQDSLHWKKVYLKAILRMKQLEDHEAFETSSLIGHSARVYALYYKDGLLCTGSDDLSAKLWDVSTGQCVYGIQTHTCAAVKFDEQKLVTGSFDNTVACWEWSSGARTQHFRGHTGAVFSVDYSDELDILVSGSADFAVKVWALSAGTCLNTLTGHTEWVTKVVLQKCKVKSLLHSPGDYILLSADKYEIKIWPIGREINCKCLKTLSVSEDRSICLQPRLHFDGKYIVCSSALGLYQWDFASYDILRVIKTPEVANLALLGFGDVFALLFDNHYLYIMDLRTESLISRWPLPEYRKSKRGSSFLAGERPG.

Residues 54 to 101 (RDFLKLLPLELSFYLLKWLDPQTLLTCCLVSKQWNKVISACTEVWQTA) form the F-box domain. WD repeat units lie at residues 146–183 (GHSA…CVYG), 185–221 (QTHT…RTQH), 224–265 (GHTG…NTLT), and 276–314 (LQKC…NCKC). Position 298 is an N6-acetyllysine (lysine 298).

As to quaternary structure, directly interacts with SKP1 and CUL1. As to expression, widely expressed during embryogenesis and in adult tissues.

Its function is as follows. Substrate-recognition component of the SCF (SKP1-CUL1-F-box protein)-type E3 ubiquitin ligase complex. The protein is F-box/WD repeat-containing protein 2 (Fbxw2) of Mus musculus (Mouse).